A 555-amino-acid chain; its full sequence is uncharacterized protein (555 aa).

Topologically, residues 1–83 (MSNEDETTRL…GRRKLLCLYG (83 aa)) are extracellular. A helical transmembrane segment spans residues 84–104 (LVMIICIAESISMTATIPLVM). Residues 105–125 (DKVAEGISDENGHYDSVAVQT) are Cytoplasmic-facing. Residues 126–146 (IVSSISSSTMMIAGAISIFMA) traverse the membrane as a helical segment. Topologically, residues 147-188 (GKWGELSDRIGRVRVFKYMSGIRVIGLLTHVFTLSSKMKYHK) are extracellular. A helical transmembrane segment spans residues 189-209 (WAIVLTACIVPSFGGLFALVA). Topologically, residues 210-229 (NGNSYVSDIVKTEHRMVTIG) are cytoplasmic. The helical transmembrane segment at 230–250 (IMMSCIYATMGVGPMFGSFLV) threads the bilayer. At 251-257 (KWTHGNG) the chain is on the extracellular side. A helical membrane pass occupies residues 258–278 (FIPIYTSIAFVILALIICETI). Residues 279 to 356 (MVEPRHETQM…LVPRHTVILL (78 aa)) are Cytoplasmic-facing. The disordered stretch occupies residues 289-311 (AHSQSTYTKRREKLRSQSGSDDA). A helical membrane pass occupies residues 357-377 (IVLDILFVCGTTSCMPALILF). The Extracellular segment spans residues 378–386 (STYEYKWHA). The helical transmembrane segment at 387 to 407 (VELGYFISILGIGRGVVLLVV) threads the bilayer. Residues 408 to 428 (SPTLLYTLKRIYQHLNHSIDK) lie on the Cytoplasmic side of the membrane. The helical transmembrane segment at 429-449 (IDIFCIQFSMIVITLSLFVMI) threads the bilayer. Over 450–459 (RFGEKTPTSM) the chain is Extracellular. Residues 460 to 480 (IIFALLQALSAFCSPTLQSGI) traverse the membrane as a helical segment. Over 481–491 (IKYTSKKHTGE) the chain is Cytoplasmic. The chain crosses the membrane as a helical span at residues 492–512 (MFGAMALVRSCVMLVIPPILL). The Extracellular portion of the chain corresponds to 513-523 (KLYGSTVSVNP). A helical membrane pass occupies residues 524–544 (SLFMYIPFSTSIVAILLTFFL). The Cytoplasmic portion of the chain corresponds to 545–555 (RIYKNPPLDGP).

It is found in the membrane. This is an uncharacterized protein from Saccharomyces cerevisiae (strain ATCC 204508 / S288c) (Baker's yeast).